Here is a 574-residue protein sequence, read N- to C-terminus: Membrane protein insertase YidC (574 aa).

The chain crosses the membrane as a helical span at residues 6–26 (VFLIFAWLMVAALLWMEWGKE). A disordered region spans residues 65–85 (QAGAPGKVPATSTTTATPAAA). A run of 5 helical transmembrane segments spans residues 350–370 (VIDY…FWVL), 376–396 (FLHN…LVLY), 447–467 (GGCL…WVLV), 491–511 (FILP…TPTP), and 525–545 (PLVF…YWVV).

This sequence belongs to the OXA1/ALB3/YidC family. Type 1 subfamily. Interacts with the Sec translocase complex via SecD. Specifically interacts with transmembrane segments of nascent integral membrane proteins during membrane integration.

It localises to the cell inner membrane. In terms of biological role, required for the insertion and/or proper folding and/or complex formation of integral membrane proteins into the membrane. Involved in integration of membrane proteins that insert both dependently and independently of the Sec translocase complex, as well as at least some lipoproteins. Aids folding of multispanning membrane proteins. This chain is Membrane protein insertase YidC, found in Xanthomonas oryzae pv. oryzae (strain PXO99A).